Here is a 139-residue protein sequence, read N- to C-terminus: 10 kDa chaperonin 2, chloroplastic (139 aa).

The transit peptide at 1 to 39 directs the protein to the chloroplast; the sequence is MASTFVCSLPNPFFAFPVKATTPSTANHTLLGSRRGCLR. Positions 51–138 are cpn-10 domain; that stretch reads KVVPQADRVL…CKESDLLALV (88 aa).

The protein belongs to the GroES chaperonin family. Expressed in leaves and stems. Expressed at low levels in germinating seeds, seedlings, rosettes leaves, flowers and siliques.

The protein resides in the plastid. It is found in the chloroplast stroma. Its function is as follows. Functions as a co-chaperone for protein folding in chloroplasts. The polypeptide is 10 kDa chaperonin 2, chloroplastic (Arabidopsis thaliana (Mouse-ear cress)).